A 398-amino-acid chain; its full sequence is Alpha-monoglucosyldiacylglycerol synthase (398 aa).

It belongs to the glycosyltransferase group 1 family. Glycosyltransferase 4 subfamily. Requires Mg(2+) as cofactor.

It localises to the cell membrane. The enzyme catalyses a 1,2-diacyl-sn-glycerol + UDP-alpha-D-glucose = a 1,2-diacyl-3-O-(alpha-D-glucopyranosyl)-sn-glycerol + UDP + H(+). Its activity is regulated as follows. Activated by the negatively charged lipids phosphatidylglycerol (PG), cardiolipin (CL), dodecylphosphate-rac-glycerol (PDG), 1,2-dioleoyl-phosphatidylglycerol (DOPG) and phosphatidylserine (PS). Its function is as follows. Glucosyltransferase involved in the biosynthesis of the non-bilayer-prone membrane lipid alpha-monoglucosyldiacylglycerol. This is a major component for maintaining a certain anionic lipid surface charge density, for balancing the bilayer to non-bilayer phase equilibria and for keeping a constant lipid bilayer spontaneous curvature (curvature packing stress). Catalyzes the transfer of a glucosyl residue from UDP-Glc to diacylglycerol (DAG) acceptor to form the corresponding alpha-glucosyl-DAG (1,2-diacyl-3-O-(alpha-D-glucopyranosyl)-sn-glycerol). It can only use UDP-Glc as sugar donor and DAG is the preferred substrate. The protein is Alpha-monoglucosyldiacylglycerol synthase (mgs) of Acholeplasma laidlawii.